The sequence spans 112 residues: ATP-dependent Clp protease adapter protein ClpS (112 aa).

The protein belongs to the ClpS family. Binds to the N-terminal domain of the chaperone ClpA.

In terms of biological role, involved in the modulation of the specificity of the ClpAP-mediated ATP-dependent protein degradation. The polypeptide is ATP-dependent Clp protease adapter protein ClpS (Rhodococcus jostii (strain RHA1)).